Here is a 385-residue protein sequence, read N- to C-terminus: ATP phosphoribosyltransferase regulatory subunit (385 aa).

Belongs to the class-II aminoacyl-tRNA synthetase family. HisZ subfamily. Heteromultimer composed of HisG and HisZ subunits.

It is found in the cytoplasm. Its pathway is amino-acid biosynthesis; L-histidine biosynthesis; L-histidine from 5-phospho-alpha-D-ribose 1-diphosphate: step 1/9. Required for the first step of histidine biosynthesis. May allow the feedback regulation of ATP phosphoribosyltransferase activity by histidine. The protein is ATP phosphoribosyltransferase regulatory subunit of Bordetella avium (strain 197N).